The primary structure comprises 322 residues: HPr kinase/phosphorylase (322 aa).

Active-site residues include H143 and K164. 158 to 165 contributes to the ATP binding site; sequence GRSGVGKS. S165 is a binding site for Mg(2+). D182 acts as the Proton acceptor; for phosphorylation activity. Proton donor; for dephosphorylation activity in catalysis. Residues 206 to 215 form an important for the catalytic mechanism of both phosphorylation and dephosphorylation region; the sequence is MEIRGLGILN. Mg(2+) is bound at residue E207. The active site involves R250. Residues 271–276 are important for the catalytic mechanism of dephosphorylation; that stretch reads PVKPGR.

It belongs to the HPrK/P family. As to quaternary structure, homohexamer. The cofactor is Mg(2+).

The enzyme catalyses [HPr protein]-L-serine + ATP = [HPr protein]-O-phospho-L-serine + ADP + H(+). The catalysed reaction is [HPr protein]-O-phospho-L-serine + phosphate + H(+) = [HPr protein]-L-serine + diphosphate. Catalyzes the ATP- as well as the pyrophosphate-dependent phosphorylation of a specific serine residue in HPr, a phosphocarrier protein of the phosphoenolpyruvate-dependent sugar phosphotransferase system (PTS). HprK/P also catalyzes the pyrophosphate-producing, inorganic phosphate-dependent dephosphorylation (phosphorolysis) of seryl-phosphorylated HPr (P-Ser-HPr). This Leptospira biflexa serovar Patoc (strain Patoc 1 / Ames) protein is HPr kinase/phosphorylase.